Here is a 444-residue protein sequence, read N- to C-terminus: N-succinylarginine dihydrolase (444 aa).

Substrate is bound by residues 19-28 (AGLSFGNVAS), Asn110, and 137-138 (HR). Residue Glu174 is part of the active site. Arg214 contributes to the substrate binding site. His250 is a catalytic residue. Positions 252 and 362 each coordinate substrate. Cys368 acts as the Nucleophile in catalysis.

The protein belongs to the succinylarginine dihydrolase family. Homodimer.

The catalysed reaction is N(2)-succinyl-L-arginine + 2 H2O + 2 H(+) = N(2)-succinyl-L-ornithine + 2 NH4(+) + CO2. It functions in the pathway amino-acid degradation; L-arginine degradation via AST pathway; L-glutamate and succinate from L-arginine: step 2/5. Its function is as follows. Catalyzes the hydrolysis of N(2)-succinylarginine into N(2)-succinylornithine, ammonia and CO(2). The polypeptide is N-succinylarginine dihydrolase (Shewanella oneidensis (strain ATCC 700550 / JCM 31522 / CIP 106686 / LMG 19005 / NCIMB 14063 / MR-1)).